The chain runs to 269 residues: Tryptophan synthase alpha chain (269 aa).

Active-site proton acceptor residues include E56 and D67.

It belongs to the TrpA family. As to quaternary structure, tetramer of two alpha and two beta chains.

The catalysed reaction is (1S,2R)-1-C-(indol-3-yl)glycerol 3-phosphate + L-serine = D-glyceraldehyde 3-phosphate + L-tryptophan + H2O. The protein operates within amino-acid biosynthesis; L-tryptophan biosynthesis; L-tryptophan from chorismate: step 5/5. Its function is as follows. The alpha subunit is responsible for the aldol cleavage of indoleglycerol phosphate to indole and glyceraldehyde 3-phosphate. The protein is Tryptophan synthase alpha chain of Mycobacterium marinum (strain ATCC BAA-535 / M).